Consider the following 130-residue polypeptide: MTLLDPLANALSHITNSERVGKREIYIKPASKLIGEVLRVMQKYGYIGEFEFIDDGRAGVYRVQLLGRINKAGAIKPRFPVKATEYEKWEKRFLPAFEFGILIVSTSQGVMSHKEARDRGIGGRLIAYVY.

This sequence belongs to the universal ribosomal protein uS8 family. In terms of assembly, part of the 30S ribosomal subunit.

Functionally, one of the primary rRNA binding proteins, it binds directly to 16S rRNA central domain where it helps coordinate assembly of the platform of the 30S subunit. The chain is Small ribosomal subunit protein uS8 from Pyrococcus horikoshii (strain ATCC 700860 / DSM 12428 / JCM 9974 / NBRC 100139 / OT-3).